Reading from the N-terminus, the 672-residue chain is Flap endonuclease 1 (672 aa).

Positions 1-106 (MGIKGLIGFL…QTLAKRKLLR (106 aa)) are N-domain. Asp34 provides a ligand contact to Mg(2+). Residues Arg47 and Arg72 each coordinate DNA. Asp88, Glu160, Glu162, Asp181, and Asp183 together coordinate Mg(2+). Positions 124–252 (AIRKYVGRTV…KTAYNLIKKH (129 aa)) are I-domain. Glu160 lines the DNA pocket. Residues Gly230 and Asp232 each contribute to the DNA site. Position 232 (Asp232) interacts with Mg(2+). An interaction with PCNA region spans residues 327–335 (TQLSLKSFF). The segment at 361-436 (VESAVDSTSD…DAKKRNKRVP (76 aa)) is disordered. The span at 370–382 (DDGKDEVPSDDKV) shows a compositional bias: basic and acidic residues.

This sequence belongs to the XPG/RAD2 endonuclease family. FEN1 subfamily. Interacts with PCNA. Three molecules of FEN1 bind to one PCNA trimer with each molecule binding to one PCNA monomer. PCNA stimulates the nuclease activity without altering cleavage specificity. Mg(2+) is required as a cofactor. In terms of processing, phosphorylated. Phosphorylation upon DNA damage induces relocalization to the nuclear plasma.

The protein localises to the nucleus. Its subcellular location is the nucleolus. It localises to the nucleoplasm. The protein resides in the mitochondrion. In terms of biological role, structure-specific nuclease with 5'-flap endonuclease and 5'-3' exonuclease activities involved in DNA replication and repair. During DNA replication, cleaves the 5'-overhanging flap structure that is generated by displacement synthesis when DNA polymerase encounters the 5'-end of a downstream Okazaki fragment. It enters the flap from the 5'-end and then tracks to cleave the flap base, leaving a nick for ligation. Also involved in the long patch base excision repair (LP-BER) pathway, by cleaving within the apurinic/apyrimidinic (AP) site-terminated flap. Acts as a genome stabilization factor that prevents flaps from equilibrating into structures that lead to duplications and deletions. Also possesses 5'-3' exonuclease activity on nicked or gapped double-stranded DNA, and exhibits RNase H activity. Also involved in replication and repair of rDNA and in repairing mitochondrial DNA. This Babesia bovis protein is Flap endonuclease 1.